Here is a 371-residue protein sequence, read N- to C-terminus: MSRSFFATVLGLALAAMTVMAAPADAKSRIKDIVAFEGVRDNQLIGYGIVVGLNGSGDSLRNAPMTKQSLEAMLERQGVNVRDGNLNTKNTAAVMVTANLPPFSAAGARMDVTVSTLGDAKSLLGGTLLVTALQGADGQTYAVAQGSVQTGSVSAGGASGSSVTKGVPTAGRIAAGGIIEKETGFQMVSMDVLRMTLRNPDFTTSRRIADVINGRFPGCAQAQNPTIVAVRPPAGMDMISFVTAIENLEVEPDAPAKVIIDEVAGVIVMGDDVRISQVAIAQGNLTISVQENPAVSQPTPFSRGGQTVVVPQSAVSIEEEKGKKLLTLGGGASLKSLIGGLNALGVTPRDMISILQAIKASGALQAEIEVM.

Residues 1–21 form the signal peptide; sequence MSRSFFATVLGLALAAMTVMA.

It belongs to the FlgI family. The basal body constitutes a major portion of the flagellar organelle and consists of four rings (L,P,S, and M) mounted on a central rod.

The protein resides in the periplasm. It localises to the bacterial flagellum basal body. Assembles around the rod to form the L-ring and probably protects the motor/basal body from shearing forces during rotation. The polypeptide is Flagellar P-ring protein (Caulobacter sp. (strain K31)).